The chain runs to 157 residues: Mini-ribonuclease 3 (157 aa).

The active site involves D18. Residues E126 to C157 form a disordered region. A compositionally biased stretch (basic and acidic residues) spans G130–E141.

Belongs to the MrnC RNase family. In terms of assembly, homodimer. It depends on Mg(2+) as a cofactor.

It is found in the cytoplasm. Involved in correct processing of both the 5' and 3' ends of 23S rRNA precursor. Processes 30S rRNA precursor transcript even in absence of ribonuclease 3 (Rnc); Rnc processes 30S rRNA into smaller rRNA precursors. The protein is Mini-ribonuclease 3 of Desulfitobacterium hafniense (strain Y51).